Here is a 466-residue protein sequence, read N- to C-terminus: 3-isopropylmalate dehydratase large subunit (466 aa).

[4Fe-4S] cluster contacts are provided by C347, C407, and C410.

The protein belongs to the aconitase/IPM isomerase family. LeuC type 1 subfamily. In terms of assembly, heterodimer of LeuC and LeuD. [4Fe-4S] cluster is required as a cofactor.

The catalysed reaction is (2R,3S)-3-isopropylmalate = (2S)-2-isopropylmalate. Its pathway is amino-acid biosynthesis; L-leucine biosynthesis; L-leucine from 3-methyl-2-oxobutanoate: step 2/4. Its function is as follows. Catalyzes the isomerization between 2-isopropylmalate and 3-isopropylmalate, via the formation of 2-isopropylmaleate. This is 3-isopropylmalate dehydratase large subunit from Salmonella paratyphi A (strain ATCC 9150 / SARB42).